An 860-amino-acid polypeptide reads, in one-letter code: MTEGTKKTSKKFKFFKFKGFGSLSNLPRSFTLRRSSASISRQSHLEPDTFEATQDDMVTVPKSPPAYARSSDMYSHMGTMPRPSIKKAQNSQAARQAQEAGPKPNLVPGGVPDPPGLEAAKEVMVKATGPLEDTPAMEPNPSAVEVDPIRKPEVPTGDVEEERPPRDVHSERAAGEPEAGSDYVKFSKEKYILDSSPEKLHKELEEELKLSSTDLRSHAWYHGRIPREVSETLVQRNGDFLIRDSLTSLGDYVLTCRWRNQALHFKINKVVVKAGESYTHIQYLFEQESFDHVPALVRYHVGSRKAVSEQSGAIIYCPVNRTFPLRYLEASYGLGQGSSKPASPVSPSGPKGSHMKRRSVTMTDGLTADKVTRSDGCPTSTSLPRPRDSIRSCALSMDQIPDLHSPMSPISESPSSPAYSTVTRVHAAPAAPSATALPASPVARRSSEPQLCPGSAPKTHGESDKGPHTSPSHTLGKASPSPSLSSYSDPDSGHYCQLQPPVRGSREWAATETSSQQARSYGERLKELSENGAPEGDWGKTFTVPIVEVTSSFNPATFQSLLIPRDNRPLEVGLLRKVKELLAEVDARTLARHVTKVDCLVARILGVTKEMQTLMGVRWGMELLTLPHGRQLRLDLLERFHTMSIMLAVDILGCTGSAEERAALLHKTIQLAAELRGTMGNMFSFAAVMGALDMAQISRLEQTWVTLRQRHTEGAILYEKKLKPFLKSLNEGKEGPPLSNTTFPHVLPLITLLECDSAPPEGPEPWGSTEHGVEVVLAHLEAARTVAHHGGLYHTNAEVKLQGFQARPELLEVFSTEFQMRLLWGSQGASSSQARRYEKFDKVLTALSHKLEPAVRSSEL.

Serine 22 is subject to Phosphoserine. Disordered regions lie at residues 51 to 117 and 130 to 180; these read EATQ…PPGL and PLED…PEAG. Basic and acidic residues predominate over residues 162–175; the sequence is ERPPRDVHSERAAG. One can recognise an SH2 domain in the interval 220–319; it reads WYHGRIPREV…QSGAIIYCPV (100 aa). Tyrosine 278 and tyrosine 283 each carry phosphotyrosine. Positions 335–537 are disordered; it reads GQGSSKPASP…LSENGAPEGD (203 aa). A Phosphoserine modification is found at serine 359. 3 stretches are compositionally biased toward low complexity: residues 405 to 420, 427 to 443, and 479 to 490; these read SPMS…PAYS, AAPA…SPVA, and SPSPSLSSYSDP. Position 440 is a phosphoserine (serine 440). Residues 586–854 enclose the Ras-GEF domain; it reads DARTLARHVT…TALSHKLEPA (269 aa). A Phosphotyrosine modification is found at tyrosine 793.

Component of a complex comprised of SH2D3C, BCAR1/CAS, and CRK. Within the complex, interacts with CRK and (via C-terminus) with BCAR1/CAS (via C-terminus). Interacts with NEDD9/HEF1. Interacts with EPHB2. As to quaternary structure, interacts with NEDD9/HEF1. Interacts with BCAR1/CAS. Interacts with PTK2B. In terms of assembly, interacts (via C-terminus) with BCAR1/CAS (via C-terminus). Interacts with IGF1. In terms of processing, phosphorylated by MAPK/ERK upon T-cell receptor stimulation in T-cells. Ubiquitously expressed.

The protein resides in the cytoplasm. It is found in the cell membrane. It localises to the cell projection. The protein localises to the axon. Its subcellular location is the ruffle membrane. Its function is as follows. Acts as an adapter protein that mediates cell signaling pathways involved in cellular functions such as cell adhesion and migration, tissue organization, and the regulation of the immune response. Plays a role in integrin-mediated cell adhesion through BCAR1-CRK-RAPGEF1 signaling and activation of the small GTPase RAP1. Promotes cell migration and invasion through the extracellular matrix. Required for marginal zone B-cell development and thymus-independent type 2 immune responses. Mediates migration and adhesion of B cells in the splenic marginal zone via promoting hyperphosphorylation of NEDD9/CASL. Plays a role in CXCL13-induced chemotaxis of B-cells. Plays a role in the migration of olfactory sensory neurons (OSNs) into the forebrain and the innervation of the olfactory bulb by the OSN axons during development. Required for the efficient tyrosine phosphorylation of BCAR1 in OSN axons. Functionally, important regulator of chemokine-induced, integrin-mediated T lymphocyte adhesion and migration, acting upstream of RAP1. Required for tissue-specific adhesion of T lymphocytes to peripheral tissues. Required for basal and CXCL2 stimulated serine-threonine phosphorylation of NEDD9. May be involved in the regulation of T-cell receptor-mediated IL2 production through the activation of the JNK pathway in T-cells. In terms of biological role, may be involved in the BCAR1/CAS-mediated JNK activation pathway. This is SH2 domain-containing protein 3C (SH2D3C) from Homo sapiens (Human).